The sequence spans 76 residues: Omega-scoloptoxin(13)-Ssm2a (76 aa).

Residues 1 to 22 (MAYIYALIFAIVVCMNTDVIQA) form the signal peptide.

Contains 4 disulfide bonds. Expressed by the venom gland.

The protein localises to the secreted. Inhibits voltage-gated calcium channel (Cav) currents in DRG neurons (IC(50)=1590 nM). The chain is Omega-scoloptoxin(13)-Ssm2a from Scolopendra mutilans (Chinese red-headed centipede).